The primary structure comprises 420 residues: MNNRRVLVLGSGVTGKSAAEFLRNRGDYVIGVDGSAEALHSCHFFCERYLDSAEEFPEDIDLCVRSPGIKTSHPFVVEAKHRGIPIVTDIQLAFQDPEFHRYPSLGVTGSAGKTTTVLFLVHLLRSVGMSACAMGNIGFPILQAMYQKGIRVVEISSFQLAEQEIEIPVLSAAAILNISENHLDYHYTLQAYTEAKSHIAKCLQSPESLWVGDGVSFGKSYLEATREINLVLDKGSALKPLYLHDRNNYCAGYALANEVTKIPLESFLQAVLTFDKPPHRIEYLGEKDGVRYINDSKATTMSSVEKALIAVKENIIVILGGRNKGSNFASLIPVLTQTVKHVVAMGECRTEIAQALSSSNLPLTQAQDLQEAVHVAQSIAQPGDVILLSPGCASFDQFRSFEERGDCFKQLVGEMEALKI.

Glycine 109–threonine 115 contacts ATP.

This sequence belongs to the MurCDEF family.

It is found in the cytoplasm. The enzyme catalyses UDP-N-acetyl-alpha-D-muramoyl-L-alanine + D-glutamate + ATP = UDP-N-acetyl-alpha-D-muramoyl-L-alanyl-D-glutamate + ADP + phosphate + H(+). It functions in the pathway cell wall biogenesis; peptidoglycan biosynthesis. Its function is as follows. Cell wall formation. Catalyzes the addition of glutamate to the nucleotide precursor UDP-N-acetylmuramoyl-L-alanine (UMA). The polypeptide is UDP-N-acetylmuramoylalanine--D-glutamate ligase (Chlamydia abortus (strain DSM 27085 / S26/3) (Chlamydophila abortus)).